The chain runs to 129 residues: Succinate dehydrogenase assembly factor 3, mitochondrial (129 aa).

This sequence belongs to the complex I LYR family. SDHAF3 subfamily. Interacts with the iron-sulfur protein subunit within the SDH catalytic dimer.

The protein resides in the mitochondrion matrix. Its function is as follows. Plays an essential role in the assembly of succinate dehydrogenase (SDH), an enzyme complex (also referred to as respiratory complex II) that is a component of both the tricarboxylic acid (TCA) cycle and the mitochondrial electron transport chain, and which couples the oxidation of succinate to fumarate with the reduction of ubiquinone (coenzyme Q) to ubiquinol. Promotes maturation of the iron-sulfur protein subunit of the SDH catalytic dimer, protecting it from the deleterious effects of oxidants. May act together with SDHAF1. The chain is Succinate dehydrogenase assembly factor 3, mitochondrial from Aspergillus fumigatus (strain ATCC MYA-4609 / CBS 101355 / FGSC A1100 / Af293) (Neosartorya fumigata).